A 452-amino-acid polypeptide reads, in one-letter code: tRNA modification GTPase MnmE (452 aa).

The (6S)-5-formyl-5,6,7,8-tetrahydrofolate site is built by Arg25, Glu81, and Lys120. Positions Gly216 to Gly375 constitute a TrmE-type G domain. Asn226 is a binding site for K(+). GTP contacts are provided by residues Asn226 to Ser231, Thr245 to Thr251, and Asp270 to Gly273. Ser230 lines the Mg(2+) pocket. Thr245, Ile247, and Thr250 together coordinate K(+). Thr251 is a Mg(2+) binding site. Lys452 is a binding site for (6S)-5-formyl-5,6,7,8-tetrahydrofolate.

The protein belongs to the TRAFAC class TrmE-Era-EngA-EngB-Septin-like GTPase superfamily. TrmE GTPase family. As to quaternary structure, homodimer. Heterotetramer of two MnmE and two MnmG subunits. K(+) serves as cofactor.

It localises to the cytoplasm. In terms of biological role, exhibits a very high intrinsic GTPase hydrolysis rate. Involved in the addition of a carboxymethylaminomethyl (cmnm) group at the wobble position (U34) of certain tRNAs, forming tRNA-cmnm(5)s(2)U34. The sequence is that of tRNA modification GTPase MnmE from Coxiella burnetii (strain Dugway 5J108-111).